We begin with the raw amino-acid sequence, 213 residues long: Transmembrane emp24 domain-containing protein p24delta8 (213 aa).

The first 22 residues, 1 to 22 (MDLCRSSILLLIIALLSPRTLS), serve as a signal peptide directing secretion. Topologically, residues 23–180 (MRYELKSSKT…QELNRSTNSK (158 aa)) are lumenal. Residues 32-148 (TKCIGEEIHE…VDMMEYQVKT (117 aa)) form the GOLD domain. N-linked (GlcNAc...) asparagine glycosylation occurs at N97. The stretch at 163–176 (LREREEEMQELNRS) forms a coiled coil. R166 carries the omega-N-methylated arginine modification. N-linked (GlcNAc...) asparagine glycosylation is present at N174. A helical transmembrane segment spans residues 181–203 (MAWLSFGSLVVCLSVAGLQFWHL). Residues 202–213 (HLKTFFEKKKLI) form an interaction with ARF1 region. At 204–213 (KTFFEKKKLI) the chain is on the cytoplasmic side. A COPII vesicle coat-binding motif is present at residues 206–207 (FF). Residues 206 to 213 (FFEKKKLI) carry the COPI vesicle coat-binding motif.

This sequence belongs to the EMP24/GP25L family. Probably oligomerizes with other members of the EMP24/GP25L family. Associates with the COPI vesicle coat (coatomer). Associates with the COPII vesicle coat (coatomer). Interacts with ARF1 (GDP-bound).

It localises to the endoplasmic reticulum membrane. It is found in the golgi apparatus. The protein resides in the cis-Golgi network membrane. Its subcellular location is the golgi stack membrane. Involved in vesicular protein trafficking. Mainly functions in the early secretory pathway. Thought to act as cargo receptor at the lumenal side for incorporation of secretory cargo molecules into transport vesicles and to be involved in vesicle coat formation at the cytoplasmic side. On Golgi membranes, acts as a primary receptor for ARF1-GDP which is involved in COPI-vesicle formation. The sequence is that of Transmembrane emp24 domain-containing protein p24delta8 from Arabidopsis thaliana (Mouse-ear cress).